Here is a 231-residue protein sequence, read N- to C-terminus: Sensory transduction protein BceR (231 aa).

A Response regulatory domain is found at 3 to 116 (KIMLIEDDHT…VLVAKIQAIL (114 aa)). 4-aspartylphosphate is present on Asp-52. Positions 127–225 (TQLKTWCGAT…KVGQGYMAKE (99 aa)) form a DNA-binding region, ompR/PhoB-type.

Post-translationally, phosphorylated by BceS.

Its subcellular location is the cytoplasm. Its function is as follows. Member of the two-component regulatory system BceS/BceR involved in the regulation of bacitracin resistance. When activated by BceS, binds to the upstream region of the bceAB promoter and up-regulates the expression of these two genes. The chain is Sensory transduction protein BceR (bceR) from Halalkalibacterium halodurans (strain ATCC BAA-125 / DSM 18197 / FERM 7344 / JCM 9153 / C-125) (Bacillus halodurans).